Reading from the N-terminus, the 377-residue chain is 3-dehydroquinate synthase (377 aa).

NAD(+) contacts are provided by residues 115–119 (GVIGD), 139–140 (TS), Lys152, and Lys161. Glu194, His256, and His275 together coordinate Zn(2+).

It belongs to the sugar phosphate cyclases superfamily. Dehydroquinate synthase family. Requires NAD(+) as cofactor. It depends on Co(2+) as a cofactor. Zn(2+) serves as cofactor.

The protein localises to the cytoplasm. The enzyme catalyses 7-phospho-2-dehydro-3-deoxy-D-arabino-heptonate = 3-dehydroquinate + phosphate. It participates in metabolic intermediate biosynthesis; chorismate biosynthesis; chorismate from D-erythrose 4-phosphate and phosphoenolpyruvate: step 2/7. Catalyzes the conversion of 3-deoxy-D-arabino-heptulosonate 7-phosphate (DAHP) to dehydroquinate (DHQ). This chain is 3-dehydroquinate synthase, found in Agrobacterium fabrum (strain C58 / ATCC 33970) (Agrobacterium tumefaciens (strain C58)).